The sequence spans 423 residues: uncharacterized protein (423 aa).

Belongs to the asfivirus E423R family.

Its subcellular location is the virion. This is an uncharacterized protein from Ornithodoros (relapsing fever ticks).